Consider the following 144-residue polypeptide: Large ribosomal subunit protein uL15 (144 aa).

The segment at 1–56 (MELNNLKPAEGAKHAKRRVGRGIGSGLGKTAGRGHKGQKSRSGGFHKVGFEGGQMP) is disordered. A compositionally biased stretch (gly residues) spans 21–31 (RGIGSGLGKTA).

This sequence belongs to the universal ribosomal protein uL15 family. As to quaternary structure, part of the 50S ribosomal subunit.

Binds to the 23S rRNA. This chain is Large ribosomal subunit protein uL15, found in Burkholderia mallei (strain NCTC 10247).